A 188-amino-acid chain; its full sequence is UPF0398 protein SE_1135 (188 aa).

It belongs to the UPF0398 family.

The protein is UPF0398 protein SE_1135 of Staphylococcus epidermidis (strain ATCC 12228 / FDA PCI 1200).